Here is an 89-residue protein sequence, read N- to C-terminus: Small ribosomal subunit protein uS15 (89 aa).

This sequence belongs to the universal ribosomal protein uS15 family. As to quaternary structure, part of the 30S ribosomal subunit. Forms a bridge to the 50S subunit in the 70S ribosome, contacting the 23S rRNA.

Its function is as follows. One of the primary rRNA binding proteins, it binds directly to 16S rRNA where it helps nucleate assembly of the platform of the 30S subunit by binding and bridging several RNA helices of the 16S rRNA. In terms of biological role, forms an intersubunit bridge (bridge B4) with the 23S rRNA of the 50S subunit in the ribosome. The chain is Small ribosomal subunit protein uS15 from Thiobacillus denitrificans (strain ATCC 25259 / T1).